The primary structure comprises 352 residues: C-C chemokine receptor type 5 (352 aa).

Topologically, residues 1–30 (MDYQVSSPTYDIDYYTSEPCQKINVKQIAA) are extracellular. Tyrosine 3 carries the sulfotyrosine modification. Residues serine 6 and serine 7 are each glycosylated (O-linked (GalNAc...) serine). A sulfotyrosine mark is found at tyrosine 10, tyrosine 14, and tyrosine 15. Intrachain disulfides connect cysteine 20/cysteine 269 and cysteine 101/cysteine 178. The helical transmembrane segment at 31 to 58 (RLLPPLYSLVFIFGFVGNILVVLILINC) threads the bilayer. Residues 59–68 (KRLKSMTDIY) lie on the Cytoplasmic side of the membrane. The helical transmembrane segment at 69–89 (LLNLAISDLLFLLTVPFWAHY) threads the bilayer. Topologically, residues 90-102 (AAAQWDFGNTMCQ) are extracellular. A helical transmembrane segment spans residues 103–124 (LLTGLYFIGFFSGIFFIILLTI). Topologically, residues 125–141 (DRYLAIVHAVFALKART) are cytoplasmic. The helical transmembrane segment at 142–166 (VTFGVVTSVITWVVAVFASLPRIIF) threads the bilayer. The Extracellular portion of the chain corresponds to 167 to 198 (TRSQREGLHYTCSSHFPYSQYQFWKNFQTLKI). Residues 199 to 218 (VILGLVLPLLVMVICYSGIL) traverse the membrane as a helical segment. Topologically, residues 219–235 (KTLLRCRNEKKRHRAVR) are cytoplasmic. The helical transmembrane segment at 236–260 (LIFTIMIVYFLFWAPYNIVLLLNTF) threads the bilayer. The Extracellular portion of the chain corresponds to 261 to 277 (QEFFGLNNCSSSNRLDQ). A helical membrane pass occupies residues 278-301 (AMQVTETLGMTHCCINPIIYAFVG). Residues 302–352 (EKFRNYLLVFFQKHIAKRFCKCCSIFQQEAPERASSVYTRSTGEQETSVGL) are Cytoplasmic-facing. 3 S-palmitoyl cysteine lipidation sites follow: cysteine 321, cysteine 323, and cysteine 324. A phosphoserine; by BARK1 mark is found at serine 336, serine 337, serine 342, and serine 349.

This sequence belongs to the G-protein coupled receptor 1 family. Interacts with PRAF2. Efficient ligand binding to CCL3/MIP-1alpha and CCL4/MIP-1beta requires sulfation, O-glycosylation and sialic acid modifications. Glycosylation on Ser-6 is required for efficient binding of CCL4. Interacts with GRK2. Interacts with ARRB1 and ARRB2. Interacts with CNIH4. Interacts with S100A4; this interaction stimulates T-lymphocyte chemotaxis. Post-translationally, sulfated on at least 2 of the N-terminal tyrosines. Sulfation is required for efficient binding of the chemokines, CCL3 and CCL4. In terms of processing, palmitoylation in the C-terminal is important for cell surface expression. Phosphorylation on serine residues in the C-terminal is stimulated by binding CC chemokines especially by APO-RANTES. Post-translationally, O-glycosylated, but not N-glycosylated. Ser-6 appears to be the major site even if Ser-7 may be also O-glycosylated. Also sialylated glycans present which contribute to chemokine binding. Thr-16 and Ser-17 may also be glycosylated and, if so, with small moieties such as a T-antigen.

Its subcellular location is the cell membrane. In terms of biological role, receptor for a number of inflammatory CC-chemokines including CCL3/MIP-1-alpha, CCL4/MIP-1-beta and RANTES and subsequently transduces a signal by increasing the intracellular calcium ion level. May play a role in the control of granulocytic lineage proliferation or differentiation. Participates in T-lymphocyte migration to the infection site by acting as a chemotactic receptor. The protein is C-C chemokine receptor type 5 (CCR5) of Chlorocebus tantalus (Tantalus monkey).